The chain runs to 241 residues: NAD-dependent protein deacetylase 2 (241 aa).

The Deacetylase sirtuin-type domain maps to 1 to 241 (MTGKPLVAIL…ALPALLRGLG (241 aa)). 7 residues coordinate NAD(+): alanine 13, threonine 17, arginine 25, glutamine 92, valine 94, aspartate 95, and histidine 112. Nicotinamide contacts are provided by valine 94 and aspartate 95. The active-site Proton acceptor is histidine 112. Zn(2+)-binding residues include cysteine 120, cysteine 123, cysteine 145, and cysteine 148. NAD(+)-binding residues include threonine 186, serine 187, asparagine 211, and isoleucine 229.

Belongs to the sirtuin family. Class U subfamily. The cofactor is Zn(2+).

It localises to the cytoplasm. The enzyme catalyses N(6)-acetyl-L-lysyl-[protein] + NAD(+) + H2O = 2''-O-acetyl-ADP-D-ribose + nicotinamide + L-lysyl-[protein]. Functionally, NAD-dependent protein deacetylase which modulates the activities of several enzymes which are inactive in their acetylated form. The protein is NAD-dependent protein deacetylase 2 of Streptomyces coelicolor (strain ATCC BAA-471 / A3(2) / M145).